Here is a 153-residue protein sequence, read N- to C-terminus: Ribosome-binding factor A (153 aa).

The interval 116–153 (DAQVAEQAQGAQYAAGEDAYRTPSDEDDAEGPESAPRV) is disordered. The span at 119–132 (VAEQAQGAQYAAGE) shows a compositional bias: low complexity.

It belongs to the RbfA family. In terms of assembly, monomer. Binds 30S ribosomal subunits, but not 50S ribosomal subunits or 70S ribosomes.

Its subcellular location is the cytoplasm. Functionally, one of several proteins that assist in the late maturation steps of the functional core of the 30S ribosomal subunit. Associates with free 30S ribosomal subunits (but not with 30S subunits that are part of 70S ribosomes or polysomes). Required for efficient processing of 16S rRNA. May interact with the 5'-terminal helix region of 16S rRNA. This Kocuria rhizophila (strain ATCC 9341 / DSM 348 / NBRC 103217 / DC2201) protein is Ribosome-binding factor A.